A 407-amino-acid polypeptide reads, in one-letter code: Phospholipid-transporting ATPase accessory subunit CDC50 (407 aa).

Positions 1–33 (MAPRRRRGAGQDGSDDGRSDSDAPKNRPPNTAF) are disordered. Over 1-48 (MAPRRRRGAGQDGSDDGRSDSDAPKNRPPNTAFRQQRMRAWQCVLTPK) the chain is Cytoplasmic. Residues 15-25 (DDGRSDSDAPK) show a composition bias toward basic and acidic residues. The helical transmembrane segment at 49–69 (LIVTVFSILAAIYLGFGAWLT) threads the bilayer. The Extracellular portion of the chain corresponds to 70–359 (YLAHTVRDLK…TMGSRNIWPG (290 aa)). Cys-85 and Cys-139 are disulfide-bonded. Asn-131 and Asn-189 each carry an N-linked (GlcNAc...) asparagine glycan. Residues Cys-193 and Cys-210 are joined by a disulfide bond. Asn-219, Asn-232, Asn-241, and Asn-314 each carry an N-linked (GlcNAc...) asparagine glycan. The helical transmembrane segment at 360-380 (IIFLIVGGICLVLDIYFILSF) threads the bilayer. Topologically, residues 381 to 407 (FIWRPRKLGDPSYLSWNQPSAPGGHSS) are cytoplasmic.

This sequence belongs to the CDC50/LEM3 family. As to quaternary structure, component of a flippase complex consisting of DNF1 and CDC50. Interacts with DNF1; the interaction is direct.

It is found in the cell membrane. Functionally, accessory component of a P4-ATPase flippase complex which catalyzes the hydrolysis of ATP coupled to the transport of phosphatidylcholine and phosphatidylserine from the lumen to the cytosolic leaflet of membranes and ensures the maintenance of asymmetric distribution of phospholipids. The chain is Phospholipid-transporting ATPase accessory subunit CDC50 from Chaetomium thermophilum (strain DSM 1495 / CBS 144.50 / IMI 039719) (Thermochaetoides thermophila).